The chain runs to 60 residues: Large ribosomal subunit protein bL32 (60 aa).

Positions 1–16 are enriched in basic residues; sequence MAVPKRKTSPSKRGMR. Residues 1–60 are disordered; it reads MAVPKRKTSPSKRGMRRSADALKAPTYVEDKNSGEMRRPHHIDLKTGMYRGRQVLTPKES. A compositionally biased stretch (basic and acidic residues) spans 28 to 44; the sequence is VEDKNSGEMRRPHHIDL.

The protein belongs to the bacterial ribosomal protein bL32 family.

The sequence is that of Large ribosomal subunit protein bL32 from Mesorhizobium japonicum (strain LMG 29417 / CECT 9101 / MAFF 303099) (Mesorhizobium loti (strain MAFF 303099)).